Here is a 334-residue protein sequence, read N- to C-terminus: Probable GTP 3',8-cyclase (334 aa).

Residues 24–256 form the Radical SAM core domain; the sequence is PYGRKVTGLR…RKKYMIDGVE (233 aa). Position 33 (R33) interacts with GTP. Positions 40 and 44 each coordinate [4Fe-4S] cluster. Y46 is an S-adenosyl-L-methionine binding site. Residue C47 coordinates [4Fe-4S] cluster. A GTP-binding site is contributed by K85. Residue G89 coordinates S-adenosyl-L-methionine. T113 is a binding site for GTP. S137 serves as a coordination point for S-adenosyl-L-methionine. K176 is a GTP binding site. Residues C269 and C272 each contribute to the [4Fe-4S] cluster site. GTP is bound at residue 274–276; that stretch reads RLR. C286 provides a ligand contact to [4Fe-4S] cluster.

Belongs to the radical SAM superfamily. MoaA family. [4Fe-4S] cluster serves as cofactor.

It catalyses the reaction GTP + AH2 + S-adenosyl-L-methionine = (8S)-3',8-cyclo-7,8-dihydroguanosine 5'-triphosphate + 5'-deoxyadenosine + L-methionine + A + H(+). Its pathway is cofactor biosynthesis; molybdopterin biosynthesis. Catalyzes the cyclization of GTP to (8S)-3',8-cyclo-7,8-dihydroguanosine 5'-triphosphate. This Methanosarcina mazei (strain ATCC BAA-159 / DSM 3647 / Goe1 / Go1 / JCM 11833 / OCM 88) (Methanosarcina frisia) protein is Probable GTP 3',8-cyclase.